The following is a 120-amino-acid chain: Large ribosomal subunit protein uL18 (120 aa).

The segment covering M1–L20 has biased composition (basic residues). The disordered stretch occupies residues M1–R26.

It belongs to the universal ribosomal protein uL18 family. In terms of assembly, part of the 50S ribosomal subunit; part of the 5S rRNA/L5/L18/L25 subcomplex. Contacts the 5S and 23S rRNAs.

In terms of biological role, this is one of the proteins that bind and probably mediate the attachment of the 5S RNA into the large ribosomal subunit, where it forms part of the central protuberance. The sequence is that of Large ribosomal subunit protein uL18 from Synechocystis sp. (strain ATCC 27184 / PCC 6803 / Kazusa).